An 817-amino-acid chain; its full sequence is MPNSNVRIPPTVPSKIIDVVDQALRARLLGGSTFNSGFDSLDSVLNLQFRLHYHVIGSNGPAKPVCDVLLKESQNLEKNMSMMEELNDYPEITKLVEKILFNCLAILFFHRGQFQESQRCLLHSLKIHNNTASQRTALMEQYDRYLIVENLYYRGLVSQDINIMQNVFYKELLAHVDTVPPESNGLLFEYISLIVAKLRFNQIQDLAENFKTTVENPFILFLYMIKKFQSPLKKHIDNDDLYLKFGQNVLLKVKFPTASETNDEALEHFNVFLQYYFKFTHIKKIKVNPSWYNFIISSMEKTFQSIEVSKTAMFLFQNLSDNSNDEIKKKTFKRESILNFVNFVKYNDKYYQLHDNSHHDIISFIDAYSFILQNSSKTDSIENVFDYDNTVSTFATSLNSFYKEYNLPLMSQSESLDWLENSTRCVYPGNISKVLTNAWSTLYEIRKCQLDFLVSNNLTSYLCNAMMLSTKEKDNADVEEQEEGEEEKALRELQFKYSYTLAQQRHIETAIKTLESLILSKNPNYYKAWHLLALCRSVQEDKEMSYKIVCSVLEAMNESLQNNTLLLNDRWQFIHLKLTQLALIEEIFGTLEALETLPEVFELYATLFPDSQPKLNSMGPKYSQTKEYLLQMVWIFAANMYMRTKDNDEDAKAAIKEASNVESKFKNLNCNIANGYLSIIKDEPGVALKEFETVLYYDENNLDALVGFAELIFPEELGVEETNLERYYTLSLDKKPGKRAKLTFVNDTDRSAAYARLKFLLECAILESIEAYYSPEVWWYLSLIYEKYQDDEYKNSLLKCIKYQELNPIRSLRYCNY.

It belongs to the YPP1 family. As to quaternary structure, interacts with STT4 and ribosomes.

Its subcellular location is the cytoplasmic granule. The protein localises to the cell membrane. In terms of biological role, involved in endocytosis. The sequence is that of Cargo-transport protein YPP1 (YPP1) from Saccharomyces cerevisiae (strain YJM789) (Baker's yeast).